The primary structure comprises 180 residues: Small ribosomal subunit protein eS10y (180 aa).

A disordered region spans residues 92–180 (LKKQQKPLGR…GGGAAGSDLP (89 aa)). Residues 108 to 128 (DRPRGPPRGDGERRFGDRDGY) are compositionally biased toward basic and acidic residues. Positions 152–180 (FRGGAGGARQGFGRGAGGFGGGAAGSDLP) are enriched in gly residues.

This sequence belongs to the eukaryotic ribosomal protein eS10 family.

It is found in the cytoplasm. This chain is Small ribosomal subunit protein eS10y (RPS10B), found in Arabidopsis thaliana (Mouse-ear cress).